Reading from the N-terminus, the 428-residue chain is Gamma-glutamyl phosphate reductase (428 aa).

It belongs to the gamma-glutamyl phosphate reductase family.

It localises to the cytoplasm. It carries out the reaction L-glutamate 5-semialdehyde + phosphate + NADP(+) = L-glutamyl 5-phosphate + NADPH + H(+). It functions in the pathway amino-acid biosynthesis; L-proline biosynthesis; L-glutamate 5-semialdehyde from L-glutamate: step 2/2. In terms of biological role, catalyzes the NADPH-dependent reduction of L-glutamate 5-phosphate into L-glutamate 5-semialdehyde and phosphate. The product spontaneously undergoes cyclization to form 1-pyrroline-5-carboxylate. The chain is Gamma-glutamyl phosphate reductase from Hyphomonas neptunium (strain ATCC 15444).